Here is a 276-residue protein sequence, read N- to C-terminus: MATYAIGDIQGCYDSLQRLLERCAFDPASDRLWLVGDLVNRGPKSLATLRLIKSLGPAALTVLGNHDLYLLMVAEGGAKFRGKDDTLQEILDAPDCAELLDWLRHQPICHTEGEYCLVHAGLLPQWTASRARELAREVEITLQGPDFREFILNLWGSEPAGWSDNLSGWARLRVIVNAMTRMRFCTLDGVMEFKVKGKLSNAPAGHIPWFDLPDRKSAKSVLVTGHWSALGLKVTPNLLALDSGCLWGGHLTAVRLEDRQVFQVDCSPTEALPLKR.

It belongs to the Ap4A hydrolase family.

The enzyme catalyses P(1),P(4)-bis(5'-adenosyl) tetraphosphate + H2O = 2 ADP + 2 H(+). Functionally, hydrolyzes diadenosine 5',5'''-P1,P4-tetraphosphate to yield ADP. The polypeptide is Bis(5'-nucleosyl)-tetraphosphatase, symmetrical (Dechloromonas aromatica (strain RCB)).